The chain runs to 132 residues: UPF0299 membrane protein YohJ (132 aa).

4 consecutive transmembrane segments (helical) span residues 8 to 28 (IWQY…GIFI), 31 to 51 (LLPV…VLLA), 63 to 83 (GCYL…VGVM), and 93 to 113 (FGPV…VVSW).

The protein belongs to the UPF0299 family.

The protein localises to the cell inner membrane. The chain is UPF0299 membrane protein YohJ from Escherichia fergusonii (strain ATCC 35469 / DSM 13698 / CCUG 18766 / IAM 14443 / JCM 21226 / LMG 7866 / NBRC 102419 / NCTC 12128 / CDC 0568-73).